A 527-amino-acid chain; its full sequence is Peptide chain release factor 3 (527 aa).

The 269-residue stretch at 9-277 (AKRRTFAIIS…AVVNWAPKPL (269 aa)) folds into the tr-type G domain. Residues 18 to 25 (SHPDAGKT), 86 to 90 (DTPGH), and 140 to 143 (NKLD) contribute to the GTP site.

Belongs to the TRAFAC class translation factor GTPase superfamily. Classic translation factor GTPase family. PrfC subfamily.

The protein localises to the cytoplasm. In terms of biological role, increases the formation of ribosomal termination complexes and stimulates activities of RF-1 and RF-2. It binds guanine nucleotides and has strong preference for UGA stop codons. It may interact directly with the ribosome. The stimulation of RF-1 and RF-2 is significantly reduced by GTP and GDP, but not by GMP. In Pseudomonas syringae pv. syringae (strain B728a), this protein is Peptide chain release factor 3.